Here is a 475-residue protein sequence, read N- to C-terminus: D-lactate dehydrogenase (475 aa).

The region spanning 43–222 (YGKARPEVLV…TELTLKVIPA (180 aa)) is the FAD-binding PCMH-type domain.

This sequence belongs to the FAD-binding oxidoreductase/transferase type 4 family. Requires FAD as cofactor. Zn(2+) serves as cofactor.

The catalysed reaction is (R)-lactate + A = pyruvate + AH2. Catalyzes the dehydrogenation of (R)-lactate (D-lactate) to pyruvate. Active in vitro with the artificial electron acceptor 2,6-dichlorophenolindophenol (DCPIP), but not with NAD, NADP, or cytochrome c. Also displays a very low oxidase activity in vitro on D-lactate and L-lactate with O2 as the electron acceptor, but this activity is most likely not physiological. In Anaerostipes hadrus, this protein is D-lactate dehydrogenase.